The chain runs to 150 residues: UPF0756 membrane protein ACICU_02320 (150 aa).

4 helical membrane passes run 1-21 (MLAQFYVNLVVLLVLLICGLL), 45-65 (FFPYIQAHGLNLGILILTIGV), 83-103 (FISFKSLVAIAIGLLVAWLGG), and 115-135 (VVAGLLIGTVAGVALLRGVPV).

Belongs to the UPF0756 family.

It localises to the cell membrane. In Acinetobacter baumannii (strain ACICU), this protein is UPF0756 membrane protein ACICU_02320.